The primary structure comprises 408 residues: Succinylornithine transaminase (408 aa).

At Lys-252 the chain carries N6-(pyridoxal phosphate)lysine.

The protein belongs to the class-III pyridoxal-phosphate-dependent aminotransferase family. AstC subfamily. The cofactor is pyridoxal 5'-phosphate.

The enzyme catalyses N(2)-succinyl-L-ornithine + 2-oxoglutarate = N-succinyl-L-glutamate 5-semialdehyde + L-glutamate. It functions in the pathway amino-acid degradation; L-arginine degradation via AST pathway; L-glutamate and succinate from L-arginine: step 3/5. In terms of biological role, catalyzes the transamination of N(2)-succinylornithine and alpha-ketoglutarate into N(2)-succinylglutamate semialdehyde and glutamate. Can also act as an acetylornithine aminotransferase. This chain is Succinylornithine transaminase, found in Salmonella dublin (strain CT_02021853).